The chain runs to 90 residues: Evasin P458 (90 aa).

The first 24 residues, 1–24, serve as a signal peptide directing secretion; sequence MEVKTFAFLQIAVLIAFSLHSASA. Cystine bridges form between cysteine 44–cysteine 63, cysteine 48–cysteine 65, and cysteine 59–cysteine 76. Asparagine 47 carries N-linked (GlcNAc...) asparagine glycosylation.

The protein resides in the secreted. In terms of biological role, salivary chemokine-binding protein which binds to host chemokines CXCL1, CXCL2, CXCL3, CXCL5, CXCL6 and CXCL13. The chain is Evasin P458 from Ixodes ricinus (Common tick).